We begin with the raw amino-acid sequence, 190 residues long: FLIGIWAAPKSEDNVPLGSPATSDLSDTSCAKTHEALKTSRNIDQHYPAPKKAEDQEFGSAANIIVDPKLFQKRRFQSPRVLFSTQPPPLSRDEQNVDNANSLNRNIRAKREDHPVHNRGEYSVCDSVNVWVANKTTATDIRGNVVTVMVDVNINNNVYKQYFFETKCRNPNPVPTGCRGIDARHWNSYC.

An N-terminal signal peptide occupies residues 1 to 7 (FLIGIWA). Residues 8–111 (APKSEDNVPL…SLNRNIRAKR (104 aa)) constitute a propeptide that is removed on maturation. Cysteine 125 and cysteine 190 form a disulfide bridge. Asparagine 134 carries N-linked (GlcNAc...) asparagine glycosylation.

It belongs to the NGF-beta family. As to quaternary structure, homodimer; non-covalently linked. Glycosylated. In terms of tissue distribution, expressed by the venom gland.

Its subcellular location is the secreted. Nerve growth factor is important for the development and maintenance of the sympathetic and sensory nervous systems. It stimulates division and differentiation of sympathetic and embryonic sensory neurons as well as basal forebrain cholinergic neurons in the brain. Its relevance in the snake venom is not clear. However, it has been shown to inhibit metalloproteinase-dependent proteolysis of platelet glycoprotein Ib alpha, suggesting a metalloproteinase inhibition to prevent metalloprotease autodigestion and/or protection against prey proteases. Binds a lipid between the two protein chains in the homodimer. The lipid-bound form promotes histamine relase from mouse mast cells, contrary to the lipid-free form. The protein is Venom nerve growth factor of Agkistrodon contortrix contortrix (Southern copperhead).